The primary structure comprises 148 residues: 3-hydroxyacyl-[acyl-carrier-protein] dehydratase FabZ (148 aa).

The active site involves H48.

Belongs to the thioester dehydratase family. FabZ subfamily.

Its subcellular location is the cytoplasm. The enzyme catalyses a (3R)-hydroxyacyl-[ACP] = a (2E)-enoyl-[ACP] + H2O. Functionally, involved in unsaturated fatty acids biosynthesis. Catalyzes the dehydration of short chain beta-hydroxyacyl-ACPs and long chain saturated and unsaturated beta-hydroxyacyl-ACPs. This chain is 3-hydroxyacyl-[acyl-carrier-protein] dehydratase FabZ, found in Nitratiruptor sp. (strain SB155-2).